The chain runs to 450 residues: Hyaluronidase-1 (450 aa).

The N-terminal stretch at 1–35 (MRPFSLEVSLHLPWAMAAHLLPVCTLFLNLLSMTQ) is a signal peptide. 2 disulfide bridges follow: C58-C348 and C222-C236. The N-linked (GlcNAc...) asparagine glycan is linked to N85. E146 acts as the Proton donor in catalysis. N-linked (GlcNAc...) asparagine glycosylation is found at N231 and N365. Intrachain disulfides connect C373-C384, C378-C433, and C435-C444. An N-linked (GlcNAc...) asparagine glycan is attached at N398. One can recognise an EGF-like domain in the interval 433–444 (CRCYRGWRGTRC).

This sequence belongs to the glycosyl hydrolase 56 family.

The protein localises to the secreted. Its subcellular location is the lysosome. The enzyme catalyses Random hydrolysis of (1-&gt;4)-linkages between N-acetyl-beta-D-glucosamine and D-glucuronate residues in hyaluronate.. Functionally, may have a role in promoting tumor progression. May block the TGFB1-enhanced cell growth. The sequence is that of Hyaluronidase-1 (HYAL1) from Bos taurus (Bovine).